The primary structure comprises 960 residues: Dynamin-like GTPase OPA1, mitochondrial (960 aa).

Residues 1-87 constitute a mitochondrion transit peptide; the sequence is MWRAGRAALA…TKYGYQPRRN (87 aa). At 88–96 the chain is on the mitochondrial matrix side; the sequence is FWPARLAAR. A helical membrane pass occupies residues 97–113; it reads LLKLRYIILGSAVGGGY. At 114-770 the chain is on the mitochondrial intermembrane side; that stretch reads TAKKTFDEWK…NAIENMIGPD (657 aa). Positions 210-254 form a coiled coil; sequence SDKEKIDQLQEELLHTQLKYQRILERLEKENKELRKLVLQKDDKG. The LQQQIQ motif motif lies at 217–222; it reads QLQEEL. Position 228 is an N6-acetyllysine (Lys228). The LQQQIQ motif signature appears at 234 to 239; that stretch reads ERLEKE. A Dynamin-type G domain is found at 285–561; it reads QDHLPRVVVV…FWKMVRESVE (277 aa). The segment at 295–302 is G1 motif; that stretch reads GDQSAGKT. GTP-binding residues include Ser298, Gly300, Lys301, Thr302, Ser303, and Gly317. Residue Thr302 coordinates Mg(2+). The G2 motif stretch occupies residues 321–324; that stretch reads MMTR. The Mg(2+) site is built by Thr323 and Asp398. Residues 398-401 form a G3 motif region; the sequence is DLPG. The interval 467-470 is G4 motif; the sequence is TKVD. 3 residues coordinate GTP: Lys468, Asp470, and Thr503. Residues 501–504 form a G5 motif region; it reads VVTG. 2 stalk region regions span residues 589 to 836 and 874 to 928; these read DRNE…IKDT and CNDV…VKLL. Positions 736-856 are paddle region; the sequence is SDKQQWDAAI…KTALNHCNLC (121 aa). Residues 771–781 lie within the membrane without spanning it; the sequence is WKKRWIYWKNR. At 782–960 the chain is on the mitochondrial intermembrane side; that stretch reads TQEQCVHNET…AFIEALHQEK (179 aa). Cysteines 856 and 874 form a disulfide. Residues 895–960 adopt a coiled-coil conformation; the sequence is RQQLTNTEVR…AFIEALHQEK (66 aa).

This sequence belongs to the TRAFAC class dynamin-like GTPase superfamily. Dynamin/Fzo/YdjA family. Oligomeric complex consisting of membrane-bound and soluble forms of OPA1. Interacts with RCC1L; RCC1L acts as a guanine nucleotide exchange factor (GEF) for OPA1 by exchanging bound GDP for free GTP. Interacts with CHCHD3 and IMMT; these interactions occur preferentially with soluble OPA1 forms. Interacts with PRELID1. Post-translationally, cleaved by OMA1 or YME1L downstream of the transmembrane region in response to different signals to generate soluble forms. Cleaved by OMA1 at position S1 following stress conditions, generating the short soluble form (Dynamin-like GTPase OPA1, short form; S-OPA1). AFG3L2 is involved in the regulation of OMA1-dependent processing of OPA1. PARL-dependent proteolytic processing releases an antiapoptotic soluble form not required for mitochondrial fusion. In terms of processing, cleavage at position S2 by YME1L is required to mediate oxidative phosphorylation (OXPHOS)-induced mitochondrial fusion. Cleavage occurs in the sequence motif Leu-Gln-Gln-Gln-Ile-Gln (LQQQIQ). Expressed in brain as well as retinal ganglion, starbust amacrine and horizontal cells of the retina. Absent from nerve fibers and photoreceptor cells of the retina.

The protein resides in the mitochondrion inner membrane. It localises to the mitochondrion intermembrane space. It carries out the reaction GTP + H2O = GDP + phosphate + H(+). With respect to regulation, activated by guanine nucleotide exchange factor RCC1L. Functionally, dynamin-related GTPase that is essential for normal mitochondrial morphology by mediating fusion of the mitochondrial inner membranes, regulating cristae morphology and maintaining respiratory chain function. Exists in two forms: the transmembrane, long form (Dynamin-like GTPase OPA1, long form; L-OPA1), which is tethered to the inner mitochondrial membrane, and the short soluble form (Dynamin-like GTPase OPA1, short form; S-OPA1), which results from proteolytic cleavage and localizes in the intermembrane space. Both forms (L-OPA1 and S-OPA1) cooperate to catalyze the fusion of the mitochondrial inner membrane. The equilibrium between L-OPA1 and S-OPA1 is essential: excess levels of S-OPA1, produced by cleavage by OMA1 following loss of mitochondrial membrane potential, lead to an impaired equilibrium between L-OPA1 and S-OPA1, inhibiting mitochondrial fusion. The balance between L-OPA1 and S-OPA1 also influences cristae shape and morphology. Involved in remodeling cristae and the release of cytochrome c during apoptosis. Proteolytic processing by PARL in response to intrinsic apoptotic signals may lead to disassembly of OPA1 oligomers and release of the caspase activator cytochrome C (CYCS) into the mitochondrial intermembrane space. Acts as a regulator of T-helper Th17 cells, which are characterized by cells with fused mitochondria with tight cristae, by mediating mitochondrial membrane remodeling: OPA1 is required for interleukin-17 (IL-17) production. Its role in mitochondrial morphology is required for mitochondrial genome maintenance. Constitutes the transmembrane long form (L-OPA1) that plays a central role in mitochondrial inner membrane fusion and cristae morphology. L-OPA1 and the soluble short form (S-OPA1) form higher-order helical assemblies that coordinate the fusion of mitochondrial inner membranes. Inner membrane-anchored L-OPA1 molecules initiate membrane remodeling by recruiting soluble S-OPA1 to rapidly polymerize into a flexible cylindrical scaffold encaging the mitochondrial inner membrane. Once at the membrane surface, the formation of S-OPA1 helices induce bilayer curvature. OPA1 dimerization through the paddle region, which inserts into cardiolipin-containing membrane, promotes GTP hydrolysis and the helical assembly of a flexible OPA1 lattice on the membrane, which drives membrane curvature and mitochondrial fusion. Plays a role in the maintenance and remodeling of mitochondrial cristae, some invaginations of the mitochondrial inner membrane that provide an increase in the surface area. Probably acts by forming helical filaments at the inside of inner membrane tubes with the shape and dimensions of crista junctions. The equilibrium between L-OPA1 and S-OPA1 influences cristae shape and morphology: increased L-OPA1 levels promote cristae stacking and elongated mitochondria, while increased S-OPA1 levels correlated with irregular cristae packing and round mitochondria shape. In terms of biological role, constitutes the soluble short form (S-OPA1) generated by cleavage by OMA1, which plays a central role in mitochondrial inner membrane fusion and cristae morphology. The transmembrane long form (L-OPA1) and the S-OPA1 form higher-order helical assemblies that coordinate the fusion of mitochondrial inner membranes. Inner membrane-anchored L-OPA1 molecules initiate membrane remodeling by recruiting soluble S-OPA1 to rapidly polymerize into a flexible cylindrical scaffold encaging the mitochondrial inner membrane. Once at the membrane surface, the formation of S-OPA1 helices induce bilayer curvature. OPA1 dimerization through the paddle region, which inserts into cardiolipin-containing membrane, promotes GTP hydrolysis and the helical assembly of a flexible OPA1 lattice on the membrane, which drives membrane curvature and mitochondrial fusion. Excess levels of S-OPA1 produced by cleavage by OMA1 following stress conditions that induce loss of mitochondrial membrane potential, lead to an impaired equilibrium between L-OPA1 and S-OPA1, thereby inhibiting mitochondrial fusion. Involved in mitochondrial safeguard in response to transient mitochondrial membrane depolarization by mediating flickering: cleavage by OMA1 leads to excess production of S-OPA1, preventing mitochondrial hyperfusion. Plays a role in the maintenance and remodeling of mitochondrial cristae, some invaginations of the mitochondrial inner membrane that provide an increase in the surface area. Probably acts by forming helical filaments at the inside of inner membrane tubes with the shape and dimensions of crista junctions. The equilibrium between L-OPA1 and S-OPA1 influences cristae shape and morphology: increased L-OPA1 levels promote cristae stacking and elongated mitochondria, while increased S-OPA1 levels correlated with irregular cristae packing and round mitochondria shape. Its function is as follows. Isoforms that contain the alternative exon 4b are required for mitochondrial genome maintenance, possibly by anchoring the mitochondrial nucleoids to the inner mitochondrial membrane. The protein is Dynamin-like GTPase OPA1, mitochondrial of Rattus norvegicus (Rat).